Reading from the N-terminus, the 391-residue chain is 8-amino-7-oxononanoate synthase (391 aa).

Pyridoxal 5'-phosphate is bound at residue 108–109 (GF). Position 133 (histidine 133) interacts with substrate. Pyridoxal 5'-phosphate contacts are provided by serine 180, histidine 208, and threonine 236. Lysine 239 is subject to N6-(pyridoxal phosphate)lysine. Position 353 (threonine 353) interacts with substrate.

It belongs to the class-II pyridoxal-phosphate-dependent aminotransferase family. BioF subfamily. Homodimer. Requires pyridoxal 5'-phosphate as cofactor.

The enzyme catalyses 6-carboxyhexanoyl-[ACP] + L-alanine + H(+) = (8S)-8-amino-7-oxononanoate + holo-[ACP] + CO2. Its pathway is cofactor biosynthesis; biotin biosynthesis. Functionally, catalyzes the decarboxylative condensation of pimeloyl-[acyl-carrier protein] and L-alanine to produce 8-amino-7-oxononanoate (AON), [acyl-carrier protein], and carbon dioxide. This is 8-amino-7-oxononanoate synthase from Thermosipho melanesiensis (strain DSM 12029 / CIP 104789 / BI429).